The following is a 445-amino-acid chain: Probable fructoselysine/psicoselysine transporter FrlA (445 aa).

The next 12 membrane-spanning stretches (helical) occupy residues 10 to 30 (LGFW…GIFV), 38 to 58 (AAGT…IVIP), 93 to 113 (GWAS…LAIV), 121 to 141 (PIDP…FMLL), 155 to 175 (LITI…IFWF), 181 to 201 (AAPT…LAGI), 236 to 256 (CLLV…LMPF), 273 to 293 (IPAL…IVIL), 334 to 354 (IILQ…TSLL), 355 to 375 (GYFT…IIWC), 389 to 410 (AFGL…STFV), and 417 to 435 (LICA…AFWA).

It belongs to the amino acid-polyamine-organocation (APC) superfamily.

Its subcellular location is the cell inner membrane. It carries out the reaction N(6)-(D-fructosyl)-L-lysine(in) = N(6)-(D-fructosyl)-L-lysine(out). It catalyses the reaction N(6)-(D-psicosyl)-L-lysine(in) = N(6)-(D-psicosyl)-L-lysine(out). It functions in the pathway carbohydrate metabolism; fructoselysine degradation. Is likely involved in the transport of fructoselysine and psicoselysine to the cytoplasm, where they are degraded. The sequence is that of Probable fructoselysine/psicoselysine transporter FrlA from Escherichia coli (strain K12).